A 214-amino-acid polypeptide reads, in one-letter code: Small ribosomal subunit protein uS5 (214 aa).

Positions 54–117 (LKYEVMDIKI…KNAKMNIIPV (64 aa)) constitute an S5 DRBM domain.

Belongs to the universal ribosomal protein uS5 family. As to quaternary structure, part of the 30S ribosomal subunit. Contacts protein S4.

Functionally, with S4 and S12 plays an important role in translational accuracy. This Sulfurisphaera tokodaii (strain DSM 16993 / JCM 10545 / NBRC 100140 / 7) (Sulfolobus tokodaii) protein is Small ribosomal subunit protein uS5.